Reading from the N-terminus, the 321-residue chain is Ferredoxin--NADP reductase (321 aa).

FAD contacts are provided by Asp28, Gln36, Tyr41, Ala81, Phe115, Asp274, and Ser315.

Belongs to the ferredoxin--NADP reductase type 2 family. As to quaternary structure, homodimer. FAD serves as cofactor.

It carries out the reaction 2 reduced [2Fe-2S]-[ferredoxin] + NADP(+) + H(+) = 2 oxidized [2Fe-2S]-[ferredoxin] + NADPH. This Frankia casuarinae (strain DSM 45818 / CECT 9043 / HFP020203 / CcI3) protein is Ferredoxin--NADP reductase.